Here is a 363-residue protein sequence, read N- to C-terminus: Protein-glutamate methylesterase/protein-glutamine glutaminase of group 3 operon (363 aa).

One can recognise a Response regulatory domain in the interval 7–124 (RVLIVDDSAS…RQALMESSGR (118 aa)). Asp-58 is modified (4-aspartylphosphate). A CheB-type methylesterase domain is found at 166 to 357 (PTTERIVCIG…REIMAWQQAK (192 aa)). Residues Ser-177, His-203, and Asp-299 contribute to the active site.

Belongs to the CheB family. Post-translationally, phosphorylated by CheA. Phosphorylation of the N-terminal regulatory domain activates the methylesterase activity.

The protein localises to the cytoplasm. It carries out the reaction [protein]-L-glutamate 5-O-methyl ester + H2O = L-glutamyl-[protein] + methanol + H(+). The enzyme catalyses L-glutaminyl-[protein] + H2O = L-glutamyl-[protein] + NH4(+). Functionally, involved in chemotaxis. Part of a chemotaxis signal transduction system that modulates chemotaxis in response to various stimuli. Catalyzes the demethylation of specific methylglutamate residues introduced into the chemoreceptors (methyl-accepting chemotaxis proteins or MCP) by CheR. Also mediates the irreversible deamidation of specific glutamine residues to glutamic acid. This is Protein-glutamate methylesterase/protein-glutamine glutaminase of group 3 operon from Rhodopseudomonas palustris (strain ATCC BAA-98 / CGA009).